The sequence spans 299 residues: Probable lipid kinase YegS (299 aa).

The DAGKc domain maps to 2 to 133; that stretch reads AEFPASLLIL…IDMAQVNKQT (132 aa). ATP-binding positions include Thr40, 66 to 72, and Thr95; that span reads GDGTINE. Leu215, Asp218, and Leu220 together coordinate Mg(2+). The Proton acceptor role is filled by Glu271.

The protein belongs to the diacylglycerol/lipid kinase family. YegS lipid kinase subfamily. Mg(2+) serves as cofactor. Ca(2+) is required as a cofactor.

The protein localises to the cytoplasm. Its function is as follows. Probably phosphorylates lipids; the in vivo substrate is unknown. The chain is Probable lipid kinase YegS from Shigella boydii serotype 18 (strain CDC 3083-94 / BS512).